The chain runs to 142 residues: Mini-ribonuclease 3 (142 aa).

D33 is an active-site residue.

This sequence belongs to the MrnC RNase family. In terms of assembly, homodimer. The cofactor is Mg(2+).

The protein localises to the cytoplasm. In terms of biological role, involved in correct processing of both the 5' and 3' ends of 23S rRNA precursor. Processes 30S rRNA precursor transcript even in absence of ribonuclease 3 (Rnc); Rnc processes 30S rRNA into smaller rRNA precursors. The chain is Mini-ribonuclease 3 from Thermoanaerobacter sp. (strain X514).